A 258-amino-acid polypeptide reads, in one-letter code: DNA-directed RNA polymerase subunit Rpo3 (258 aa).

Belongs to the archaeal Rpo3/eukaryotic RPB3 RNA polymerase subunit family. As to quaternary structure, part of the RNA polymerase complex.

Its subcellular location is the cytoplasm. It catalyses the reaction RNA(n) + a ribonucleoside 5'-triphosphate = RNA(n+1) + diphosphate. Functionally, DNA-dependent RNA polymerase (RNAP) catalyzes the transcription of DNA into RNA using the four ribonucleoside triphosphates as substrates. This Pyrobaculum calidifontis (strain DSM 21063 / JCM 11548 / VA1) protein is DNA-directed RNA polymerase subunit Rpo3.